The chain runs to 79 residues: Sec-independent protein translocase protein TatA (79 aa).

The helical transmembrane segment at 1 to 21 (MGSLSIWHWIVVIAVVLLLFG) threads the bilayer. Residues 43–60 (LQDDEKTAEKPDPVKSID) are compositionally biased toward basic and acidic residues. Positions 43 to 79 (LQDDEKTAEKPDPVKSIDHNAPTAAAPTRTDVGSKAV) are disordered.

This sequence belongs to the TatA/E family. As to quaternary structure, the Tat system comprises two distinct complexes: a TatABC complex, containing multiple copies of TatA, TatB and TatC subunits, and a separate TatA complex, containing only TatA subunits. Substrates initially bind to the TatABC complex, which probably triggers association of the separate TatA complex to form the active translocon.

The protein localises to the cell inner membrane. Part of the twin-arginine translocation (Tat) system that transports large folded proteins containing a characteristic twin-arginine motif in their signal peptide across membranes. TatA could form the protein-conducting channel of the Tat system. The sequence is that of Sec-independent protein translocase protein TatA from Rhodopseudomonas palustris (strain BisB5).